The chain runs to 731 residues: Auxin response factor 3 (731 aa).

Positions 1-22 are enriched in low complexity; it reads MASSASSSSSPSSRPPLMALPS. The tract at residues 1–41 is disordered; that stretch reads MASSASSSSSPSSRPPLMALPSFYRPPWPSERGGEQRATDC. Residues 191 to 293 constitute a DNA-binding region (TF-B3); that stretch reads FCKTLTASDT…ELRLGVRRAT (103 aa).

It belongs to the ARF family. In terms of assembly, homo and heterodimers. In terms of tissue distribution, expressed in roots, culms, leaves and young panicles.

Its subcellular location is the nucleus. In terms of biological role, auxin response factors (ARFs) are transcriptional factors that bind specifically to the DNA sequence 5'-TGTCTC-3' found in the auxin-responsive promoter elements (AuxREs). The chain is Auxin response factor 3 (ARF3) from Oryza sativa subsp. japonica (Rice).